Here is a 403-residue protein sequence, read N- to C-terminus: S-arrestin (403 aa).

T231 is subject to Phosphothreonine. The interval 381-403 (RQNLKDTGENTEGKKDEDAGQDE) is disordered.

It belongs to the arrestin family. Monomer. Homodimer. Homotetramer. Interacts with RHO (via the phosphorylated C-terminus). As to expression, retina and pineal gland.

It localises to the cell projection. The protein resides in the cilium. Its subcellular location is the photoreceptor outer segment. The protein localises to the membrane. In terms of biological role, binds to photoactivated, phosphorylated RHO and terminates RHO signaling via G-proteins by competing with G-proteins for the same binding site on RHO. May play a role in preventing light-dependent degeneration of retinal photoreceptor cells. The chain is S-arrestin (Sag) from Rattus norvegicus (Rat).